The primary structure comprises 97 residues: Putative pterin-4-alpha-carbinolamine dehydratase (97 aa).

It belongs to the pterin-4-alpha-carbinolamine dehydratase family.

It catalyses the reaction (4aS,6R)-4a-hydroxy-L-erythro-5,6,7,8-tetrahydrobiopterin = (6R)-L-erythro-6,7-dihydrobiopterin + H2O. The protein is Putative pterin-4-alpha-carbinolamine dehydratase of Dinoroseobacter shibae (strain DSM 16493 / NCIMB 14021 / DFL 12).